Reading from the N-terminus, the 372-residue chain is Peptidyl-prolyl cis-trans isomerase D (372 aa).

The PPIase cyclophilin-type domain maps to 10–173 (FFDIQIGQQQ…TDVTIAECGE (164 aa)). The disordered stretch occupies residues 174–193 (LTGEDYDNADKQTPDATGDP). TPR repeat units lie at residues 215–248 (ASEL…LNEF), 268–304 (FTLH…ASAK), and 309–342 (AKVY…APSD).

Belongs to the cyclophilin-type PPIase family. PPIase D subfamily.

The protein resides in the cytoplasm. The catalysed reaction is [protein]-peptidylproline (omega=180) = [protein]-peptidylproline (omega=0). PPIases accelerate the folding of proteins. It catalyzes the cis-trans isomerization of proline imidic peptide bonds in oligopeptides. This chain is Peptidyl-prolyl cis-trans isomerase D (cpr6), found in Emericella nidulans (strain FGSC A4 / ATCC 38163 / CBS 112.46 / NRRL 194 / M139) (Aspergillus nidulans).